A 69-amino-acid chain; its full sequence is Putative membrane protein insertion efficiency factor (69 aa).

This sequence belongs to the UPF0161 family.

Its subcellular location is the cell membrane. In terms of biological role, could be involved in insertion of integral membrane proteins into the membrane. The sequence is that of Putative membrane protein insertion efficiency factor from Clostridium botulinum (strain ATCC 19397 / Type A).